Reading from the N-terminus, the 786-residue chain is MEQGAKRVRFYIVAADGLSKRDLFRQPDPFAILTVDGEQTHTTKVIKKSVNPYWNEGFEVTVKPSSVISIRLFDQKKFKKKDQGFLGLVSFRMREVGSFRSNREVSLTRPLKKSSTTNLSVLGNLVLKVAPSKIRAPAGNHSSTTANRTTSTPTTTTARTTRTTPRPTATTNTSNQSTSNSTRNGTSAATSNGTGTGAGTGASHRSSPVTNRQTNNTSALSNSNAHIMSSFEDQYGRLPPGWERRADSLGRTYYVDHNTRTTTWTRPASSTNPVHNTSSDSQRLNHQNRHLPDDSNPSLMQSDSGNDLPFGWEMRYTDTGRPYFVDHNTRTTTWVDPRNPLVRPNGGSSTVGSLMQPQSLSHLGPLPSGWEMRLTNSARVYFVDHNTKTTTWDDPRLPSALDQDVPQYKCDFRRKLIYFRSQPGMRPLPGQCNVKVRRDHIFEDSYAEIMRYSAHDLKKRLMIRFDGEDGLDYGGLSREFFFLLSHKMFDPIYCLFEYSAVDNYTLQINPHSSINPEHLNYFRFIGRVIGLAIFHRRFLDAFFVVSLYKKLLRKKVSLADMESIDAEFYRSLKWVLENDITGILDLTFSVEEDHFGEVRTVELITNGENIEVTEENKKKYVDLVTEWRVSKRVEQQFNAFYSGFVELVSPDLVNVFDERELELLIGGISDVDVEDWKSHTEYRTYIATDPVIKWFWEIIAGWKNEDRSKLLQFATGTSRIPVNGFRDLQGSDGPRKFTIEKAGTPDQLPVAHTCFNRLDLPDYPSKDTLHEKLSLAVENTVGFGNE.

The 109-residue stretch at 1–109 folds into the C2 domain; that stretch reads MEQGAKRVRF…RSNREVSLTR (109 aa). Disordered regions lie at residues 134–225 and 263–306; these read IRAP…NSNA and TWTR…DSGN. Low complexity predominate over residues 142–193; that stretch reads SSTTANRTTSTPTTTTARTTRTTPRPTATTNTSNQSTSNSTRNGTSAATSNG. The segment covering 204-213 has biased composition (polar residues); the sequence is HRSSPVTNRQ. Low complexity predominate over residues 214–225; that stretch reads TNNTSALSNSNA. The WW 1 domain maps to 236–269; the sequence is GRLPPGWERRADSLGRTYYVDHNTRTTTWTRPAS. Composition is skewed to polar residues over residues 263-285 and 295-305; these read TWTR…QRLN and SNPSLMQSDSG. WW domains follow at residues 306 to 339 and 364 to 397; these read NDLP…DPRN and GPLP…DPRL. One can recognise an HECT domain in the interval 453-786; that stretch reads SAHDLKKRLM…VENTVGFGNE (334 aa). Residue Cys754 is the Glycyl thioester intermediate of the active site.

It carries out the reaction S-ubiquitinyl-[E2 ubiquitin-conjugating enzyme]-L-cysteine + [acceptor protein]-L-lysine = [E2 ubiquitin-conjugating enzyme]-L-cysteine + N(6)-ubiquitinyl-[acceptor protein]-L-lysine.. It functions in the pathway protein modification; protein ubiquitination. Functionally, E3 ubiquitin-protein ligase which accepts ubiquitin from an E2 ubiquitin-conjugating enzyme in the form of a thioester and then directly transfers the ubiquitin to targeted substrates. In Schizosaccharomyces pombe (strain 972 / ATCC 24843) (Fission yeast), this protein is E3 ubiquitin-protein ligase pub3 (pub3).